An 890-amino-acid chain; its full sequence is DNA mismatch repair protein MutS (890 aa).

Position 607-614 (607-614 (GPNMSGKS)) interacts with ATP.

The protein belongs to the DNA mismatch repair MutS family.

Its function is as follows. This protein is involved in the repair of mismatches in DNA. It is possible that it carries out the mismatch recognition step. This protein has a weak ATPase activity. The sequence is that of DNA mismatch repair protein MutS from Bacillus thuringiensis (strain Al Hakam).